The primary structure comprises 115 residues: NADH-ubiquinone oxidoreductase chain 3 (115 aa).

3 helical membrane-spanning segments follow: residues 3 to 23, 55 to 75, and 84 to 104; these read LIMTLFINITLTSLLVLIAFW, FFLVAITFLLFDLEIALLLPL, and LTTMLTTALLLISLLAVSLAY.

This sequence belongs to the complex I subunit 3 family. Core subunit of respiratory chain NADH dehydrogenase (Complex I) which is composed of 45 different subunits. Interacts with TMEM186. Interacts with TMEM242.

The protein localises to the mitochondrion inner membrane. The enzyme catalyses a ubiquinone + NADH + 5 H(+)(in) = a ubiquinol + NAD(+) + 4 H(+)(out). Its function is as follows. Core subunit of the mitochondrial membrane respiratory chain NADH dehydrogenase (Complex I) which catalyzes electron transfer from NADH through the respiratory chain, using ubiquinone as an electron acceptor. Essential for the catalytic activity of complex I. In Ailurus fulgens (Himalayan red panda), this protein is NADH-ubiquinone oxidoreductase chain 3.